Here is a 762-residue protein sequence, read N- to C-terminus: Cell surface protein (762 aa).

The N-terminal stretch at 1-26 is a signal peptide; it reads MKNLKKLIAVVSTFALVFSAMAVGFA. SLH domains are found at residues 27 to 90, 92 to 155, and 156 to 204; these read ATTP…EMAK, EKSA…WPYG, and YLAK…KEVL. Y297, Y516, Y520, and Y632 each carry an O-linked (Glc...) tyrosine glycan.

Glycosylated; contains 8% carbohydrates, which correspond to about 40 to 50 sugar molecules per monomer. O-linked glycans consist of Glc, GalNAc and GlcNAc.

It localises to the secreted. The protein resides in the cell wall. Its subcellular location is the S-layer. Its function is as follows. The S-layer is a paracrystalline mono-layered assembly of proteins which coat the surface of bacteria. In Thermoanaerobacter kivui (Acetogenium kivui), this protein is Cell surface protein.